We begin with the raw amino-acid sequence, 189 residues long: MKSAIIKEFLAHQETIAKVIETMQEPLEKASKIAVETLKNGNKILLCGNGGSAADAQHFAAELTGRYKTERRGLPGIALTTDTSALTAIGNDYGYDRVFDRQVEALASKGDLLIGISTSGNSTNVINALKVARDLGCKTIGLTGRDGGKMNELCDINLVVPSNDTPRIQEMHILFEHTICQIIDNELSH.

One can recognise an SIS domain in the interval 34 to 189 (AVETLKNGNK…CQIIDNELSH (156 aa)). Residue 49–51 (NGG) coordinates substrate. 2 residues coordinate Zn(2+): His58 and Glu62. Residues Glu62, 91–92 (ND), 117–119 (STS), Ser122, and Gln169 each bind substrate. Positions 169 and 177 each coordinate Zn(2+).

This sequence belongs to the SIS family. GmhA subfamily. Homotetramer. It depends on Zn(2+) as a cofactor.

The protein resides in the cytoplasm. It catalyses the reaction 2 D-sedoheptulose 7-phosphate = D-glycero-alpha-D-manno-heptose 7-phosphate + D-glycero-beta-D-manno-heptose 7-phosphate. It functions in the pathway carbohydrate biosynthesis; D-glycero-D-manno-heptose 7-phosphate biosynthesis; D-glycero-alpha-D-manno-heptose 7-phosphate and D-glycero-beta-D-manno-heptose 7-phosphate from sedoheptulose 7-phosphate: step 1/1. Catalyzes the isomerization of sedoheptulose 7-phosphate in D-glycero-D-manno-heptose 7-phosphate. The polypeptide is Phosphoheptose isomerase (Aliarcobacter butzleri (strain RM4018) (Arcobacter butzleri)).